A 313-amino-acid chain; its full sequence is Olfactory receptor 1f45 (313 aa).

At 1–25 (MSSTNQSSVTEFLLLGLSRQPQQQQ) the chain is on the extracellular side. Residue Asn5 is glycosylated (N-linked (GlcNAc...) asparagine). The helical transmembrane segment at 26–50 (LLFLLFLIMYLATVLGNLLIILAIG) threads the bilayer. The Cytoplasmic segment spans residues 51–57 (TDSRLHT). A helical transmembrane segment spans residues 58–79 (PMYFFLSNLSFVDVCFSSTTVP). Residues 80–100 (KVLANHILGSQAISFSGCLTQ) lie on the Extracellular side of the membrane. A disulfide bridge links Cys97 with Cys189. The helical transmembrane segment at 101-120 (LYFLAVFGNMDNFLLAVMSY) threads the bilayer. Residues 121–139 (DRFVAICHPLHYTTKMTRQ) lie on the Cytoplasmic side of the membrane. A helical membrane pass occupies residues 140–158 (LCVLLVVGSWVVANMNCLL). At 159–196 (HILLMARLSFCADNMIPHFFCDGTPLLKLSCSDTHLNE) the chain is on the extracellular side. A helical transmembrane segment spans residues 197–219 (LMILTEGAVVMVTPFVCILISYI). At 220–236 (HITCAVLRVSSPRGGWK) the chain is on the cytoplasmic side. The chain crosses the membrane as a helical span at residues 237–260 (SFSTCGSHLAVVCLFYGTVIAVYF). Topologically, residues 261 to 272 (NPSSSHLAGRDM) are extracellular. The chain crosses the membrane as a helical span at residues 273 to 292 (AAAVMYAVVTPMLNPFIYSL). Topologically, residues 293–313 (RNSDMKAALRKVLAMRFPSKQ) are cytoplasmic.

It belongs to the G-protein coupled receptor 1 family. In terms of tissue distribution, olfactory epithelium.

It localises to the cell membrane. Its function is as follows. Odorant receptor. The protein is Olfactory receptor 1f45 (Or1f45) of Rattus norvegicus (Rat).